The following is a 76-amino-acid chain: ATP synthase subunit 9, mitochondrial (76 aa).

The next 2 membrane-spanning stretches (helical) occupy residues 14-34 and 52-72; these read ISTI…AALI and ILGF…SFLL.

Belongs to the ATPase C chain family. As to quaternary structure, F-type ATPases have 2 components, CF(1) - the catalytic core - and CF(0) - the membrane proton channel. CF(1) has five subunits: alpha(3), beta(3), gamma(1), delta(1), epsilon(1). CF(0) has three main subunits: a, b and c.

The protein localises to the mitochondrion membrane. Functionally, mitochondrial membrane ATP synthase (F(1)F(0) ATP synthase or Complex V) produces ATP from ADP in the presence of a proton gradient across the membrane which is generated by electron transport complexes of the respiratory chain. F-type ATPases consist of two structural domains, F(1) - containing the extramembraneous catalytic core and F(0) - containing the membrane proton channel, linked together by a central stalk and a peripheral stalk. During catalysis, ATP synthesis in the catalytic domain of F(1) is coupled via a rotary mechanism of the central stalk subunits to proton translocation. Part of the complex F(0) domain. A homomeric c-ring of probably 10 subunits is part of the complex rotary element. The polypeptide is ATP synthase subunit 9, mitochondrial (ATP9) (Vanderwaltozyma polyspora (strain ATCC 22028 / DSM 70294 / BCRC 21397 / CBS 2163 / NBRC 10782 / NRRL Y-8283 / UCD 57-17) (Kluyveromyces polysporus)).